The primary structure comprises 569 residues: Rab GTPase-binding effector protein 2 (569 aa).

Disordered stretches follow at residues 1–38, 181–267, and 388–414; these read MAAAAPVAADDDERRRRPGAALEDSRPQEGANGEAELG, QRRP…ASLV, and RAEQLPSSAPQGPQQEQGEEESLPSSV. A2 carries the N-acetylalanine modification. A compositionally biased stretch (low complexity) spans 29-38; it reads EGANGEAELG. Positions 34-184 form a coiled coil; that stretch reads EAELGELSRL…ELIQEIQRRP (151 aa). S189, S193, S200, and S204 each carry phosphoserine. The span at 245 to 257 shows a compositional bias: low complexity; that stretch reads SSSSLPRSRQGLS. Residues 292-391 are a coiled coil; it reads WEQLQMEGRQ…EENQGLRAEQ (100 aa). Positions 393–403 are enriched in low complexity; that stretch reads PSSAPQGPQQE. Positions 423 to 523 form a coiled coil; that stretch reads RTRQEARAQL…LQAELETSEQ (101 aa).

It belongs to the rabaptin family. In terms of assembly, heterodimer with RABGEF1. The dimer binds RAB5A that has been activated by GTP-binding. Interacts with SDCCAG8; this interaction is important for ciliogenesis regulation. Interacts with RAB4; this interaction may mediate VEGFR2 cell surface expression.

It is found in the cytoplasm. The protein localises to the early endosome. Its subcellular location is the cytoskeleton. It localises to the microtubule organizing center. The protein resides in the centrosome. It is found in the cilium basal body. In terms of biological role, plays a role in membrane trafficking and in homotypic early endosome fusion. Participates in arteriogenesis by regulating vascular endothelial growth factor receptor 2/VEGFR2 cell surface expression and endosomal trafficking. By interacting with SDCCAG8, localizes to centrosomes and plays a critical role in ciliogenesis. In Pongo abelii (Sumatran orangutan), this protein is Rab GTPase-binding effector protein 2 (RABEP2).